We begin with the raw amino-acid sequence, 428 residues long: C4-dicarboxylate transport protein (428 aa).

Helical transmembrane passes span 8–28 (SLYFQVLTAIAIGILLGHFYP), 44–64 (LIKMIIAPVIFCTVVTGIAGM), 76–96 (VALLYFEIVSTIALIIGLIIV), 142–162 (IGAFASGNILQVLLFAVLFGF), 184–204 (VIFGIINMIMRLAPIGAFGAM), 222–242 (LIICFYITCILFVVLVLGSIA), 326–346 (IVHQITLLIVLLLSSKGAAGV), and 352–372 (IVLAATLSAVGHLPVAGLALI).

The protein belongs to the dicarboxylate/amino acid:cation symporter (DAACS) (TC 2.A.23) family.

It is found in the cell inner membrane. Responsible for the transport of dicarboxylates such as succinate, fumarate, and malate from the periplasm across the membrane. The sequence is that of C4-dicarboxylate transport protein from Shigella dysenteriae serotype 1 (strain Sd197).